The chain runs to 648 residues: Phosphatidylinositol polyphosphate 5-phosphatase type IV (648 aa).

A disordered region spans residues 1 to 64; the sequence is MPSKSACLRH…PLSMPAKPSN (64 aa). Polar residues predominate over residues 36 to 54; that stretch reads TSASLPAADSQSSQTNSMP. 2 consecutive repeat copies span residues 59-62 and 76-79. The tract at residues 59 to 243 is 4 X 4 AA repeats of P-X-X-P; that stretch reads PAKPSNQNLQ…AHSNLGPSRP (185 aa). The disordered stretch occupies residues 99 to 158; sequence RFRGSQEDLTVQNGASPCRGSLQDSVAQSPAYSRPLPCLSTSLQEIPKPRRATGSEGGSP. S103 bears the Phosphoserine mark. Over residues 120–129 the composition is skewed to polar residues; it reads LQDSVAQSPA. The stretch at 147 to 150 is repeat 3; sequence PRRA. A Phosphothreonine modification is found at T197. Repeat unit 4 spans residues 240–243; the sequence is PSRP. Residues S245 and S260 each carry the phosphoserine modification. Cysteine methyl ester is present on C645. C645 carries the S-farnesyl cysteine lipid modification. Positions 646–648 are cleaved as a propeptide — removed in mature form; the sequence is TVS.

Belongs to the inositol 1,4,5-trisphosphate 5-phosphatase type IV family. As to quaternary structure, interacts (when prenylated) with PDE6D; this is important for normal location in cilia.

It localises to the cytoplasm. Its subcellular location is the cytoskeleton. The protein resides in the cilium axoneme. It is found in the golgi apparatus. The protein localises to the golgi stack membrane. It localises to the cell membrane. Its subcellular location is the cell projection. The protein resides in the ruffle. It is found in the nucleus. The catalysed reaction is a 1,2-diacyl-sn-glycero-3-phospho-(1D-myo-inositol-4,5-bisphosphate) + H2O = a 1,2-diacyl-sn-glycero-3-phospho-(1D-myo-inositol 4-phosphate) + phosphate. It carries out the reaction a 1,2-diacyl-sn-glycero-3-phospho-(1D-myo-inositol-3,4,5-trisphosphate) + H2O = a 1,2-diacyl-sn-glycero-3-phospho-(1D-myo-inositol-3,4-bisphosphate) + phosphate. It catalyses the reaction a 1,2-diacyl-sn-glycero-3-phospho-(1D-myo-inositol-3,5-bisphosphate) + H2O = a 1,2-diacyl-sn-glycero-3-phospho-(1D-myo-inositol-3-phosphate) + phosphate. Functionally, phosphatidylinositol (PtdIns) phosphatase that specifically hydrolyzes the 5-phosphate of phosphatidylinositol-3,4,5-trisphosphate (PtdIns(3,4,5)P3), phosphatidylinositol 4,5-bisphosphate PtdIns (4,5)P2 and phosphatidylinositol 3,5-bisphosphate (PtdIns(3,5)P2). Specific for lipid substrates, inactive towards water soluble inositol phosphates. Plays an essential role in the primary cilium by controlling ciliary growth and phosphoinositide 3-kinase (PI3K) signaling and stability. The sequence is that of Phosphatidylinositol polyphosphate 5-phosphatase type IV (Inpp5e) from Rattus norvegicus (Rat).